A 362-amino-acid polypeptide reads, in one-letter code: E3 ubiquitin-protein ligase TM129 (362 aa).

The Lumenal segment spans residues 1-6 (MESPAV). The chain crosses the membrane as a helical span at residues 7 to 27 (TFTLAYVVFSVCFVFTPNEFH). Residues 28–56 (SAGITVQNLLSGWLGSEDVAFVHYHIRRS) are Cytoplasmic-facing. The helical transmembrane segment at 57–77 (SATLLAHSLLPMGYFIGMCFA) threads the bilayer. The Lumenal segment spans residues 78 to 94 (APEKELYNVHKAADGWK). Residues 95–115 (VFVLMAVLLPIATSILAFYWS) traverse the membrane as a helical segment. Topologically, residues 116 to 362 (QKRWSNHPLA…FCIVDVCIVR (247 aa)) are cytoplasmic. The RING-type; degenerate zinc finger occupies 285 to 350 (CIGCMQTNAN…SSQVPCPTCR (66 aa)).

This sequence belongs to the TMEM129 family. Integral component of ER-resident dislocation complexes.

The protein localises to the endoplasmic reticulum membrane. It catalyses the reaction S-ubiquitinyl-[E2 ubiquitin-conjugating enzyme]-L-cysteine + [acceptor protein]-L-lysine = [E2 ubiquitin-conjugating enzyme]-L-cysteine + N(6)-ubiquitinyl-[acceptor protein]-L-lysine.. The protein operates within protein modification; protein ubiquitination. E3 ubiquitin-protein ligase involved in ER-associated protein degradation, preferentially associates with the E2 enzyme UBE2J2. This is E3 ubiquitin-protein ligase TM129 (tmem129) from Xenopus laevis (African clawed frog).